The primary structure comprises 514 residues: Alpha-1B adrenergic receptor (514 aa).

Over 1 to 45 (MNPDLDTGHNTSAPAHWGELKDANFTGPNQTSSNSTLPQLDVTRA) the chain is Extracellular. 4 N-linked (GlcNAc...) asparagine glycosylation sites follow: asparagine 10, asparagine 24, asparagine 29, and asparagine 34. The chain crosses the membrane as a helical span at residues 46–69 (ISVGCLGAFILFAIVGNILVILSV). Topologically, residues 70 to 82 (ACNRHLRTPTNYF) are cytoplasmic. The helical transmembrane segment at 83-104 (IVNLAIADLLLSFTDLPFSATL) threads the bilayer. Over 105 to 114 (EVLGYWVLGR) the chain is Extracellular. A helical membrane pass occupies residues 115-140 (IFCDIWAAVDVLCCTASILSLCAISI). The cysteines at positions 117 and 194 are disulfide-linked. Residues 141-160 (DRYIGVRYSLQYPTLVTRRK) lie on the Cytoplasmic side of the membrane. The helical transmembrane segment at 161–183 (AILALLSVWVLSTVISIGPLLGW) threads the bilayer. The Extracellular segment spans residues 184–200 (KEPAPNDDKECGVTEEP). A helical transmembrane segment spans residues 201-223 (FYALFSSLGSFYIPLAVILVMYC). Residues 224-294 (RVYIVAKRTT…FSREKKAAKT (71 aa)) are Cytoplasmic-facing. Threonine 263 bears the Phosphothreonine mark. The chain crosses the membrane as a helical span at residues 295 to 318 (LGIVVGMFILCWLPFFIALPLGSL). Over 319-325 (FSTLKPP) the chain is Extracellular. Residues 326-350 (DAVFKVVFWLGYFNSCLNPIIYPCS) traverse the membrane as a helical segment. The Cytoplasmic portion of the chain corresponds to 351–514 (SKEFKRAFMR…SNMPLAPGHF (164 aa)). Cysteine 364 carries the S-palmitoyl cysteine lipid modification. The Nuclear localization signal signature appears at 367 to 377 (RGGRRRRRRRR). Disordered regions lie at residues 391–429 (GGSL…GYLG) and 473–514 (LGEP…PGHF). A compositionally biased stretch (polar residues) spans 409–423 (SCMSGSQRTLPSASP).

Belongs to the G-protein coupled receptor 1 family. Adrenergic receptor subfamily. ADRA1B sub-subfamily. As to quaternary structure, homo- and heterooligomer. Heterooligomerizes with ADRA1B homooligomers in cardiac myocytes. Interacts with CAVIN4.

It localises to the nucleus membrane. It is found in the cell membrane. The protein resides in the cytoplasm. The protein localises to the membrane. Its subcellular location is the caveola. In terms of biological role, this alpha-adrenergic receptor mediates its action by association with G proteins that activate a phosphatidylinositol-calcium second messenger system. Its effect is mediated by G(q) and G(11) proteins. Nuclear ADRA1A-ADRA1B heterooligomers regulate phenylephrine (PE)-stimulated ERK signaling in cardiac myocytes. The sequence is that of Alpha-1B adrenergic receptor (Adra1b) from Mus musculus (Mouse).